Here is a 496-residue protein sequence, read N- to C-terminus: MTTTENALTPDVRNGIEFKVADLSLADYGRRDIELSEQEMPGLMSLRREYHDVQPLKGARISGSLHMTVQTAVLIETLVALGAEVRWASCNIFSTQDHAAAAVVVGPHGTPEEPRGVPVFAWKGETLEEYWWAAEQALTWPPLADGTEAPANMILDDGGDATMLVLRGAQYEKAGVVPPDDEDDSAEHRVFLNLLRARFETDKTKWTKISESIKGVTEETTTGVLRLYQFAAAGDLAFPAINVNDSVTKSKFDNKYGCRHSLIDGINRGTDVLIGGKNVLVCGYGDVGKGSVESLAGQGARVTVTEIDPINALQALMEGYNVKRVEDVIGEADIVITATGNKDIITLEHMKAMKDKAILGNIGHFDNEIQIARLEKSGAIKTNIRPQVDLWTFPDTGKSIIVLSEGRLLNLGNATGHPSFVMSNSFSNQVIAQIELWTKNDEYDNEVYRLPKHLDEKVARIHVEALGGELTKLTKEQAEYIGVDVDGPYKADHYRY.

3 residues coordinate substrate: threonine 68, aspartate 157, and glutamate 219. Residue 220 to 222 coordinates NAD(+); the sequence is TTT. Substrate contacts are provided by lysine 249 and aspartate 253. Residues asparagine 254, 283–288, glutamate 306, asparagine 341, 362–364, and asparagine 410 each bind NAD(+); these read GYGDVG and IGH.

The protein belongs to the adenosylhomocysteinase family. The cofactor is NAD(+).

Its subcellular location is the cytoplasm. It catalyses the reaction S-adenosyl-L-homocysteine + H2O = L-homocysteine + adenosine. It functions in the pathway amino-acid biosynthesis; L-homocysteine biosynthesis; L-homocysteine from S-adenosyl-L-homocysteine: step 1/1. In terms of biological role, may play a key role in the regulation of the intracellular concentration of adenosylhomocysteine. This chain is Adenosylhomocysteinase, found in Mycolicibacterium paratuberculosis (strain ATCC BAA-968 / K-10) (Mycobacterium paratuberculosis).